We begin with the raw amino-acid sequence, 599 residues long: NADH-quinone oxidoreductase subunit C/D (599 aa).

Residues 1–189 are NADH dehydrogenase I subunit C; that stretch reads MTDLTTHDLA…DPFVLTKQKE (189 aa). The tract at residues 213 to 599 is NADH dehydrogenase I subunit D; the sequence is DFMFLNLGPN…IDFVMSDVDR (387 aa).

This sequence in the N-terminal section; belongs to the complex I 30 kDa subunit family. In the C-terminal section; belongs to the complex I 49 kDa subunit family. As to quaternary structure, NDH-1 is composed of 13 different subunits. Subunits NuoB, CD, E, F, and G constitute the peripheral sector of the complex.

Its subcellular location is the cell inner membrane. It carries out the reaction a quinone + NADH + 5 H(+)(in) = a quinol + NAD(+) + 4 H(+)(out). Its function is as follows. NDH-1 shuttles electrons from NADH, via FMN and iron-sulfur (Fe-S) centers, to quinones in the respiratory chain. The immediate electron acceptor for the enzyme in this species is believed to be ubiquinone. Couples the redox reaction to proton translocation (for every two electrons transferred, four hydrogen ions are translocated across the cytoplasmic membrane), and thus conserves the redox energy in a proton gradient. The polypeptide is NADH-quinone oxidoreductase subunit C/D (Pectobacterium carotovorum subsp. carotovorum (strain PC1)).